Here is a 59-residue protein sequence, read N- to C-terminus: Large ribosomal subunit protein uL30 (59 aa).

Belongs to the universal ribosomal protein uL30 family. Part of the 50S ribosomal subunit.

This chain is Large ribosomal subunit protein uL30, found in Proteus mirabilis (strain HI4320).